Consider the following 264-residue polypeptide: Flagellar basal-body rod protein FlgG (264 aa).

This sequence belongs to the flagella basal body rod proteins family. In terms of assembly, the basal body constitutes a major portion of the flagellar organelle and consists of four rings (L,P,S, and M) mounted on a central rod. The rod consists of about 26 subunits of FlgG in the distal portion, and FlgB, FlgC and FlgF are thought to build up the proximal portion of the rod with about 6 subunits each.

It localises to the bacterial flagellum basal body. This Bacillus subtilis (strain 168) protein is Flagellar basal-body rod protein FlgG (flgG).